Here is a 361-residue protein sequence, read N- to C-terminus: Septin-2 (361 aa).

Tyr-17 bears the Phosphotyrosine mark. The 273-residue stretch at 34 to 306 folds into the Septin-type G domain; the sequence is KGFEFTLMVV…ENFRSERLKR (273 aa). The interval 44–51 is G1 motif; it reads GESGLGKS. GTP-binding positions include 44–51, Thr-78, Gly-104, and 183–191; these read GESGLGKS and KADTLTLKE. Residues 101–104 form a G3 motif region; sequence DTPG. Positions 182–185 are G4 motif; it reads AKAD. The residue at position 190 (Lys-190) is an N6-acetyllysine. The residue at position 211 (Tyr-211) is a Phosphotyrosine. Residue Ser-218 is modified to Phosphoserine. Positions 241 and 256 each coordinate GTP. The important for dimerization stretch occupies residues 260-270; that stretch reads WGVVEVENPEH.

The protein belongs to the TRAFAC class TrmE-Era-EngA-EngB-Septin-like GTPase superfamily. Septin GTPase family. Septins polymerize into heterooligomeric protein complexes that form filaments, and associate with cellular membranes, actin filaments and microtubules. GTPase activity is required for filament formation. Filaments are assembled from asymmetrical heterotrimers, composed of SEPTIN2, SEPTIN6 and SEPTIN7 that associate head-to-head to form a hexameric unit. Interaction between SEPTIN2 and SEPTIN7 seems indirect. Interacts with SEPTIN5. Interaction with SEPTIN4 not detected. Interacts with SEPTIN9. Component of a septin core octameric complex consisting of SEPTIN12, SEPTIN7, SEPTIN6 and SEPTIN2 or SEPTIN4 in the order 12-7-6-2-2-6-7-12 or 12-7-6-4-4-6-7-12 and located in the sperm annulus. Interacts with MAP4. Interacts with DZIP1L.

The protein resides in the cytoplasm. It is found in the cytoskeleton. The protein localises to the spindle. It localises to the chromosome. Its subcellular location is the centromere. The protein resides in the kinetochore. It is found in the cleavage furrow. The protein localises to the midbody. It localises to the cell cortex. Its subcellular location is the cell projection. The protein resides in the cilium membrane. It is found in the cilium. The protein localises to the flagellum. Functionally, filament-forming cytoskeletal GTPase. Forms a filamentous structure with SEPTIN12, SEPTIN6, SEPTIN2 and probably SEPTIN4 at the sperm annulus which is required for the structural integrity and motility of the sperm tail during postmeiotic differentiation. Required for normal organization of the actin cytoskeleton. Plays a role in the biogenesis of polarized columnar-shaped epithelium by maintaining polyglutamylated microtubules, thus facilitating efficient vesicle transport, and by impeding MAP4 binding to tubulin. Required for the progression through mitosis. Forms a scaffold at the midplane of the mitotic splindle required to maintain CENPE localization at kinetochores and consequently chromosome congression. During anaphase, may be required for chromosome segregation and spindle elongation. Plays a role in ciliogenesis and collective cell movements. In cilia, required for the integrity of the diffusion barrier at the base of the primary cilium that prevents diffusion of transmembrane proteins between the cilia and plasma membranes: probably acts by regulating the assembly of the tectonic-like complex (also named B9 complex) by localizing TMEM231 protein. This is Septin-2 from Bos taurus (Bovine).